Here is a 1067-residue protein sequence, read N- to C-terminus: Protein bric-a-brac 2 (1067 aa).

The tract at residues 30–121 (MAPPEEPKMV…PPRPLTSSEV (92 aa)) is disordered. Composition is skewed to basic and acidic residues over residues 47-62 (HLEDQNRKYSPEREVE) and 86-98 (KSPEKDVETELVK). Tyr-55 is modified (phosphotyrosine). A phosphoserine mark is found at Ser-56, Ser-87, and Ser-147. Residues 223–288 (VDVTLSCEGH…MYKGEINVCQ (66 aa)) form the BTB domain. Disordered regions lie at residues 312-412 (GRGE…QSQP), 444-505 (ANQR…AAQH), and 525-563 (GAAGAGGAGSGSGSGASAPTGGTGVAGSGAGAAVGSHHD). Acidic residues predominate over residues 326–335 (FDDEDEEEEL). Position 377 is a phosphoserine (Ser-377). Thr-384 carries the post-translational modification Phosphothreonine. Residues 391–412 (GGESEISERGSSGTPGQSQSQP) show a composition bias toward low complexity. 2 stretches are compositionally biased toward gly residues: residues 525–538 (GAAGAGGAGSGSGS) and 545–556 (GGTGVAGSGAGA). The HTH psq-type domain maps to 635-687 (FRERGPLKSWRPEAMAEAIFSVLKEGLSLSQAARKFDIPYPTFVLYANRVHNM). A DNA-binding region (H-T-H motif) is located at residues 645–690 (RPEAMAEAIFSVLKEGLSLSQAARKFDIPYPTFVLYANRVHNMLGP). The a.T hook DNA-binding region spans 697–708 (DPRPKARGRPQR). Disordered stretches follow at residues 796 to 829 (QILSQQQQHQQHHQQQAHHQQQPSHHQQQSPHAQ), 860 to 879 (AKHQQQQGERRGSENLPDLS), and 891 to 967 (VMPS…PYSA). Low complexity predominate over residues 812–829 (AHHQQQPSHHQQQSPHAQ). The segment covering 904 to 914 (AAPNSAASYAR) has biased composition (low complexity). Basic and acidic residues predominate over residues 915–933 (ELSRERERDRERERERELS). Residues 934 to 949 (RQYGSQSRGSSSGSGS) are compositionally biased toward low complexity.

As to expression, leg imaginal disk at the central region of the tarsus and in eye antenna disk at the basal cylinder.

Its subcellular location is the nucleus. Its function is as follows. Probably acts as a transcriptional regulator. Required for the specification of the tarsal segment. Also involved in antenna development. This is Protein bric-a-brac 2 (bab2) from Drosophila melanogaster (Fruit fly).